The chain runs to 221 residues: GTP cyclohydrolase III (221 aa).

Belongs to the archaeal-type GTP cyclohydrolase family.

It catalyses the reaction GTP + 3 H2O = 2-amino-5-formylamino-6-(5-phospho-D-ribosylamino)pyrimidin-4(3H)-one + 2 phosphate + 2 H(+). Its function is as follows. Catalyzes the formation of 2-amino-5-formylamino-6-ribofuranosylamino-4(3H)-pyrimidinone ribonucleotide monophosphate and inorganic phosphate from GTP. Also has an independent pyrophosphate phosphohydrolase activity. This is GTP cyclohydrolase III from Pyrobaculum neutrophilum (strain DSM 2338 / JCM 9278 / NBRC 100436 / V24Sta) (Thermoproteus neutrophilus).